The chain runs to 229 residues: MTVVTLGELLDAGVHFGHQASRWNPKMFPYIYAERNGIHVIDLVQTARLLTHAYEFVQKASQEKKSFLFVGTKRQAASIIAEEAQRCGGHYVNNRWLGGILTNWSTVQKRVEYLKELDAKEEDGTLDRLPKKEAAFLRREQEKLSHNLRGLINMTQIPDIVILVDPKRETTALLECRKLGIPIISILDTNCDPNLVDIPIPANDDAVRSVKLIISTLADGILEGKQSYQ.

It belongs to the universal ribosomal protein uS2 family.

The protein localises to the plastid. It is found in the chloroplast. The chain is Small ribosomal subunit protein uS2c (rps2) from Emiliania huxleyi (Coccolithophore).